The primary structure comprises 279 residues: tRNA pseudouridine synthase A (279 aa).

D54 serves as the catalytic Nucleophile. Y112 is a binding site for substrate.

It belongs to the tRNA pseudouridine synthase TruA family. As to quaternary structure, homodimer.

It carries out the reaction uridine(38/39/40) in tRNA = pseudouridine(38/39/40) in tRNA. Its function is as follows. Formation of pseudouridine at positions 38, 39 and 40 in the anticodon stem and loop of transfer RNAs. The protein is tRNA pseudouridine synthase A of Cutibacterium acnes (strain DSM 16379 / KPA171202) (Propionibacterium acnes).